The following is a 309-amino-acid chain: HPr kinase/phosphorylase (309 aa).

Residues H138 and K159 contribute to the active site. Residue 153 to 160 (GASGIGKS) participates in ATP binding. A Mg(2+)-binding site is contributed by S160. The active-site Proton acceptor; for phosphorylation activity. Proton donor; for dephosphorylation activity is D177. An important for the catalytic mechanism of both phosphorylation and dephosphorylation region spans residues 201-210 (IEIRGVGIID). E202 serves as a coordination point for Mg(2+). R243 is a catalytic residue. Residues 264-269 (PVKTGR) form an important for the catalytic mechanism of dephosphorylation region.

This sequence belongs to the HPrK/P family. Homohexamer. It depends on Mg(2+) as a cofactor.

The enzyme catalyses [HPr protein]-L-serine + ATP = [HPr protein]-O-phospho-L-serine + ADP + H(+). The catalysed reaction is [HPr protein]-O-phospho-L-serine + phosphate + H(+) = [HPr protein]-L-serine + diphosphate. Its function is as follows. Catalyzes the ATP- as well as the pyrophosphate-dependent phosphorylation of a specific serine residue in HPr, a phosphocarrier protein of the phosphoenolpyruvate-dependent sugar phosphotransferase system (PTS). HprK/P also catalyzes the pyrophosphate-producing, inorganic phosphate-dependent dephosphorylation (phosphorolysis) of seryl-phosphorylated HPr (P-Ser-HPr). The two antagonistic activities of HprK/P are regulated by several intracellular metabolites, which change their concentration in response to the absence or presence of rapidly metabolisable carbon sources (glucose, fructose, etc.) in the growth medium. Therefore, by controlling the phosphorylation state of HPr, HPrK/P is a sensor enzyme that plays a major role in the regulation of carbon metabolism and sugar transport: it mediates carbon catabolite repression (CCR), and regulates PTS-catalyzed carbohydrate uptake and inducer exclusion. This is HPr kinase/phosphorylase from Lactococcus lactis subsp. lactis (strain IL1403) (Streptococcus lactis).